A 103-amino-acid chain; its full sequence is Large ribosomal subunit protein bL21 (103 aa).

This sequence belongs to the bacterial ribosomal protein bL21 family. In terms of assembly, part of the 50S ribosomal subunit. Contacts protein L20.

In terms of biological role, this protein binds to 23S rRNA in the presence of protein L20. The sequence is that of Large ribosomal subunit protein bL21 from Shewanella sp. (strain MR-7).